The chain runs to 342 residues: S-adenosylmethionine:tRNA ribosyltransferase-isomerase (342 aa).

It belongs to the QueA family. Monomer.

The protein localises to the cytoplasm. The enzyme catalyses 7-aminomethyl-7-carbaguanosine(34) in tRNA + S-adenosyl-L-methionine = epoxyqueuosine(34) in tRNA + adenine + L-methionine + 2 H(+). It participates in tRNA modification; tRNA-queuosine biosynthesis. Transfers and isomerizes the ribose moiety from AdoMet to the 7-aminomethyl group of 7-deazaguanine (preQ1-tRNA) to give epoxyqueuosine (oQ-tRNA). The chain is S-adenosylmethionine:tRNA ribosyltransferase-isomerase from Streptococcus pyogenes serotype M12 (strain MGAS2096).